The following is a 770-amino-acid chain: Amyloid-beta precursor protein (770 aa).

Residues 1–17 (MLPSLALLLLAAWTVRA) form the signal peptide. Topologically, residues 18–701 (LEVPTDGNAG…AEDVGSNKGA (684 aa)) are extracellular. The GFLD subdomain stretch occupies residues 28–123 (LLAEPQIAMF…PYRCLVGEFV (96 aa)). The E1 domain occupies 28-189 (LLAEPQIAMF…RGVEFVCCPL (162 aa)). Cystine bridges form between Cys38/Cys62, Cys73/Cys117, Cys98/Cys105, Cys133/Cys187, Cys144/Cys174, and Cys158/Cys186. 96–110 (NWCKRGRKQCKTHTH) lines the heparin pocket. Residues 131-189 (DKCKFLHQERMDVCETHLHWHTVAKETCSEKSTNLHDYGMLLPCGIDKFRGVEFVCCPL) form a cuBD subdomain region. Residues 135-155 (FLHQERMDVCETHLHWHTVAK) form a copper-binding region. 3 residues coordinate Cu(2+): His147, His151, and Tyr168. The segment at 181–188 (GVEFVCCP) is zinc-binding. Residues Glu183, Cys186, and Cys187 each contribute to the Zn(2+) site. Residues 196–207 (IDSADAEEDDSD) show a composition bias toward acidic residues. Residues 196 to 283 (IDSADAEEDD…TTTTTTTESV (88 aa)) form a disordered region. Position 198 is a phosphoserine; by CK2 (Ser198). Phosphoserine; by CK1 is present on Ser206. A sulfotyrosine mark is found at Tyr217 and Tyr262. The span at 228 to 264 (VAEEEEVADVEEEEAEDDEDVEDGDEVEEEAEEPYEE) shows a compositional bias: acidic residues. Residues 268–281 (RTTSIATTTTTTTE) show a composition bias toward low complexity. Intrachain disulfides connect Cys291-Cys341, Cys300-Cys324, and Cys316-Cys337. A BPTI/Kunitz inhibitor domain is found at 291-341 (CSEQAETGPCRAMISRWYFDVTEGKCAPFFYGGCGGNRNNFDTEEYCMAVC). At Tyr336 the chain carries Sulfotyrosine. The OX-2 motif lies at 344–365 (VSSQSLLKTTSEPLPQDPVKLP). One can recognise an E2 domain in the interval 374-565 (AVDKYLETPG…EEIQDEVDEL (192 aa)). A heparin-binding region spans residues 391–423 (FQKAKERLEAKHRERMSQVMREWEEAERQAKNL). Position 441 is a phosphoserine (Ser441). Residues 491-522 (FNMLKKYVRAEQKDRQHTLKHFEHVRMVDPKK) are heparin-binding. Tyr497 is modified (phosphotyrosine). The interval 523–540 (AAQIRSQVMTHLRVIYER) is collagen-binding. N-linked (GlcNAc...) asparagine glycans are attached at residues Asn542 and Asn571. A glycan (O-linked (Xyl...) (chondroitin sulfate) serine; in L-APP isoforms) is linked at Ser656. Cu(2+) contacts are provided by His677 and His685. Residues His677 and His685 each coordinate Zn(2+). The tract at residues 695-722 (VGSNKGAIIGLMVGGVVIATVIVITLVM) is interaction with PSEN1. The chain crosses the membrane as a helical span at residues 702-722 (IIGLMVGGVVIATVIVITLVM). At 723–770 (LKKKQYTSIHHGVVEVDAAVTPEERHLSKMQQNGYENPTYKFFEQMQN) the chain is on the cytoplasmic side. Positions 724–734 (KKKQYTSIHHG) match the Basolateral sorting signal motif. Thr729 carries the phosphothreonine modification. Ser730 is subject to Phosphoserine; by APP-kinase I. The interval 732-751 (HHGVVEVDAAVTPEERHLSK) is interaction with G(o)-alpha. Phosphothreonine; by CDK5 and MAPK10 is present on Thr743. The tract at residues 756–770 (GYENPTYKFFEQMQN) is required for the interaction with KIF5B and for anterograde transport in axons. Tyr757 is subject to Phosphotyrosine; by ABL1. Residues 757-762 (YENPTY) carry the YENPXY motif; contains endocytosis signal motif. A Glycyl lysine isopeptide (Lys-Gly) (interchain with G-Cter in ubiquitin) cross-link involves residue Lys763.

It belongs to the APP family. As to quaternary structure, binds, via its C-terminus, to the PID domain of several cytoplasmic proteins, including APBB family members, the APBA family, MAPK8IP1, SHC1 and NUMB and DAB1. Binding to DAB1 inhibits its serine phosphorylation. Interacts (via NPXY motif) with DAB2 (via PID domain); the interaction is impaired by tyrosine phosphorylation of the NPXY motif. Also interacts with GPCR-like protein BPP, APPBP1, IB1, KNS2 (via its TPR domains), APPBP2 (via BaSS) and DDB1. In vitro, it binds MAPT via the MT-binding domains. Associates with microtubules in the presence of ATP and in a kinesin-dependent manner. Interacts, through a C-terminal domain, with GNAO1. Amyloid-beta protein 42 binds CHRNA7 in hippocampal neurons. Amyloid-beta associates with HADH2. Interacts with CPEB1, ANKS1B and AGER. Interacts with ITM2B. Interacts with ITM2C. Interacts with IDE. Can form homodimers; dimerization is enhanced in the presence of Cu(2+) ions. Can form homodimers; this is promoted by heparin binding. Amyloid-beta protein 40 interacts with S100A9. CTF-alpha product of APP interacts with GSAP. Isoform APP695 interacts with SORL1 (via N-terminal ectodomain); this interaction retains APP in the trans-Golgi network and reduces processing into soluble APP-alpha and amyloid-beta peptides. The C99 fragment also interacts with SORL1. Isoform APP751 interacts with SORL1. Isoform APP770 interacts with SORL1. Interacts with PLD3. Interacts with VDAC1. Interacts with NSG1; could regulate APP processing. Amyloid-beta protein 42 interacts with FPR2. Interacts with SYT7. Interacts (via transmembrane region) with PSEN1; the interaction is direct. Interacts with LRRK2. Interacts (via cytoplasmic domain) with KIF5B. Interacts (via C-terminus) with APBB2/FE65L1 (via C-terminus). Interacts (via intracellular domain) with APBB3. Proteolytically processed under normal cellular conditions. Cleavage either by alpha-secretase, beta-secretase or theta-secretase leads to generation and extracellular release of soluble APP peptides, S-APP-alpha and S-APP-beta, and the retention of corresponding membrane-anchored C-terminal fragments, C80, C83 and C99. Subsequent processing of C80 and C83 by gamma-secretase yields P3 peptides. This is the major secretory pathway and is non-amyloidogenic. Alternatively, presenilin/nicastrin-mediated gamma-secretase processing of C99 releases the amyloid-beta proteins, amyloid-beta protein 40 and amyloid-beta protein 42, major components of amyloid plaques, and the cytotoxic C-terminal fragments, gamma-CTF(50), gamma-CTF(57) and gamma-CTF(59). PSEN1 cleavage is more efficient with C83 than with C99 as substrate (in vitro). Amyloid-beta protein 40 and Amyloid-beta protein 42 are cleaved by ACE. Many other minor amyloid-beta peptides, amyloid-beta 1-X peptides, are found in cerebral spinal fluid (CSF) including the amyloid-beta X-15 peptides, produced from the cleavage by alpha-secretase. Post-translationally, proteolytically cleaved by caspases during neuronal apoptosis. Cleavage at Asp-739 by either caspase-3, -8 or -9 results in the production of the neurotoxic C31 peptide and the increased production of amyloid-beta peptides. In terms of processing, N-glycosylated. O-glycosylated. O-linkage of chondroitin sulfate to the L-APP isoforms produces the APP proteoglycan core proteins, the appicans. The chondroitin sulfate chain of appicans contains 4-O-sulfated galactose in the linkage region and chondroitin sulfate E in the repeated disaccharide region. Post-translationally, phosphorylation in the C-terminal on tyrosine, threonine and serine residues is neuron-specific. Phosphorylation can affect APP processing, neuronal differentiation and interaction with other proteins. Phosphorylated on Thr-743 in neuronal cells by Cdc5 kinase and Mapk10, in dividing cells by Cdc2 kinase in a cell-cycle dependent manner with maximal levels at the G2/M phase and, in vitro, by GSK-3-beta. The Thr-743 phosphorylated form causes a conformational change which reduces binding of Fe65 family members. In dopaminergic (DA) neurons, phosphorylation on Thr-743 by LRKK2 promotes the production and the nuclear translocation of the APP intracellular domain (AICD) which induces DA neuron apoptosis. Phosphorylation on Tyr-757 is required for SHC binding. Phosphorylated in the extracellular domain by casein kinases on both soluble and membrane-bound APP. This phosphorylation is inhibited by heparin. In terms of processing, extracellular binding and reduction of copper, results in a corresponding oxidation of Cys-144 and Cys-158, and the formation of a disulfide bond. Trophic-factor deprivation triggers the cleavage of surface APP by beta-secretase to release sAPP-beta which is further cleaved to release an N-terminal fragment of APP (N-APP). Post-translationally, amyloid-beta peptides are degraded by IDE. In terms of processing, sulfated on tyrosine residues. In terms of tissue distribution, expressed in the brain. In the brain, non-L-APP isoforms are expressed in neurons, isoform APP695 being the predominant form. In astrocytes and microglial cells, almost 50% is L-isoform (appican).

The protein resides in the cell membrane. Its subcellular location is the membrane. It is found in the perikaryon. The protein localises to the cell projection. It localises to the growth cone. The protein resides in the clathrin-coated pit. Its subcellular location is the early endosome. It is found in the cytoplasmic vesicle. The protein localises to the endoplasmic reticulum. It localises to the golgi apparatus. The protein resides in the cell surface. Its subcellular location is the nucleus. It is found in the cytoplasm. The protein localises to the secreted. Functionally, functions as a cell surface receptor and performs physiological functions on the surface of neurons relevant to neurite growth, neuronal adhesion and axonogenesis. Interaction between APP molecules on neighboring cells promotes synaptogenesis. Involved in cell mobility and transcription regulation through protein-protein interactions. Can promote transcription activation through binding to APBB1-KAT5 and inhibit Notch signaling through interaction with Numb. Couples to apoptosis-inducing pathways such as those mediated by G(o) and JIP. Inhibits G(o)-alpha ATPase activity. Acts as a kinesin I membrane receptor, mediating the axonal transport of beta-secretase and presenilin 1. By acting as a kinesin I membrane receptor, plays a role in axonal anterograde transport of cargo towards synapses in axons. May be involved in copper homeostasis/oxidative stress through copper ion reduction. Can regulate neurite outgrowth through binding to components of the extracellular matrix such as heparin and collagen I and IV. The splice isoforms that contain the BPTI domain possess protease inhibitor activity. Induces a AGER-dependent pathway that involves activation of p38 MAPK, resulting in internalization of amyloid-beta peptide and leading to mitochondrial dysfunction in cultured mitochondrial dysfunction in cultured cortical neurons. Provides Cu(2+) ions for GPC1 which are required for release of nitric oxide (NO) and subsequent degradation of the heparan sulfate chains on GPC1. In terms of biological role, amyloid-beta peptides are lipophilic metal chelators with metal-reducing activity. Binds transient metals such as copper, zinc and iron. Rat and mouse amyloid-beta peptides bind only weakly transient metals and have little reducing activity due to substitutions of transient metal chelating residues. Amyloid-beta protein 42 may activate mononuclear phagocytes in the brain and elicits inflammatory responses. Promotes both tau aggregation and TPK II-mediated phosphorylation. Also binds GPC1 in lipid rafts. Appicans elicit adhesion of neural cells to the extracellular matrix and may regulate neurite outgrowth in the brain. Its function is as follows. The gamma-CTF peptides as well as the caspase-cleaved peptides, including C31, are potent enhancers of neuronal apoptosis. In Rattus norvegicus (Rat), this protein is Amyloid-beta precursor protein.